The sequence spans 250 residues: Probable septum site-determining protein MinC (250 aa).

The interval 110-143 (SGARERPLEPEPEVVKKPEPAPAPPPPPEPEVRP) is disordered. Residues 112-128 (ARERPLEPEPEVVKKPE) are compositionally biased toward basic and acidic residues. Residues 129 to 138 (PAPAPPPPPE) are compositionally biased toward pro residues.

Belongs to the MinC family. In terms of assembly, interacts with MinD and FtsZ.

Functionally, cell division inhibitor that blocks the formation of polar Z ring septums. Rapidly oscillates between the poles of the cell to destabilize FtsZ filaments that have formed before they mature into polar Z rings. Prevents FtsZ polymerization. In Pseudomonas putida (strain ATCC 47054 / DSM 6125 / CFBP 8728 / NCIMB 11950 / KT2440), this protein is Probable septum site-determining protein MinC.